Reading from the N-terminus, the 413-residue chain is Tubby-like F-box protein 6 (413 aa).

Residues 67–122 form the F-box domain; it reads SIWVDLPPELLLDIIQRIESEQSLWPGRRDVVACASVCKSWREMTKEVVKVPELSG.

It belongs to the TUB family. As to expression, ubiquitous, with higher levels in flowers.

This Arabidopsis thaliana (Mouse-ear cress) protein is Tubby-like F-box protein 6.